Reading from the N-terminus, the 220-residue chain is MKDGAAGSLNGIERRGLMFVLSSPSGAGKTTLSRMLVDEAPGLRMSVSATTRPKRPGEVDGRDYYFVDRPKFDAMVEAGEFLEWANVFDNCYGTPRAPVEAALSAGNDVLFDIDWQGTQQLRSRASNDVVSVFILPPSVQDLEHRLHTRAQDSDEVIRGRMKKAGDEMSHFDAYDYIVVNDNIGVAFESVKAILRAEQLKRERQIGIDAFVREMRRELEK.

The Guanylate kinase-like domain occupies 16-195 (GLMFVLSSPS…AFESVKAILR (180 aa)). 23-30 (SPSGAGKT) serves as a coordination point for ATP.

It belongs to the guanylate kinase family.

The protein resides in the cytoplasm. The enzyme catalyses GMP + ATP = GDP + ADP. Essential for recycling GMP and indirectly, cGMP. The protein is Guanylate kinase of Rhodopseudomonas palustris (strain HaA2).